Here is a 930-residue protein sequence, read N- to C-terminus: Translation initiation factor IF-2 (930 aa).

The tract at residues 29-316 (GEFVKSASST…GRKSKRAKRA (288 aa)) is disordered. Pro residues predominate over residues 81–120 (RPGPKPGPPVAQQPAAPAAPPAAPPAPPTPAAAPPSPAPA). Residues 121–135 (APAAATPAEPAAPSA) show a composition bias toward low complexity. 2 stretches are compositionally biased toward pro residues: residues 136-155 (RPGPTPGPRPGPSAPKPGAP) and 180-191 (PRPQGPGGPRPG). The span at 192–204 (PGAGGPRPGGGPR) shows a compositional bias: gly residues. The segment covering 228-240 (GGGPRPGGGPRPT) has biased composition (pro residues). Over residues 241–301 (PGGAGRPGGG…GAAGAFGRPG (61 aa)) the composition is skewed to gly residues. Positions 305 to 314 (KRGRKSKRAK) are enriched in basic residues. The region spanning 426-598 (IRPPVVTVMG…VILTADASLD (173 aa)) is the tr-type G domain. A G1 region spans residues 435 to 442 (GHVDHGKT). 435–442 (GHVDHGKT) contributes to the GTP binding site. The tract at residues 460 to 464 (GITQH) is G2. Positions 485–488 (DTPG) are G3. Residues 485 to 489 (DTPGH) and 539 to 542 (NKID) each bind GTP. Residues 539–542 (NKID) are G4. Residues 575 to 577 (SAK) are G5.

Belongs to the TRAFAC class translation factor GTPase superfamily. Classic translation factor GTPase family. IF-2 subfamily.

It localises to the cytoplasm. Its function is as follows. One of the essential components for the initiation of protein synthesis. Protects formylmethionyl-tRNA from spontaneous hydrolysis and promotes its binding to the 30S ribosomal subunits. Also involved in the hydrolysis of GTP during the formation of the 70S ribosomal complex. The chain is Translation initiation factor IF-2 from Mycolicibacterium vanbaalenii (strain DSM 7251 / JCM 13017 / BCRC 16820 / KCTC 9966 / NRRL B-24157 / PYR-1) (Mycobacterium vanbaalenii).